Reading from the N-terminus, the 266-residue chain is NADH dehydrogenase [ubiquinone] iron-sulfur protein 3, mitochondrial (266 aa).

A mitochondrion-targeting transit peptide spans 1-38 (MAAAVAAAARGCWQRLVGSAAPARVAGRPSVLLLPVRR).

This sequence belongs to the complex I 30 kDa subunit family. As to quaternary structure, core subunit of respiratory chain NADH dehydrogenase (Complex I) which is composed of 45 different subunits. Interacts with NDUFAF3. Interacts with RAB5IF. Found in subcomplexes containing subunits NDUFS2, MT-ND1 and NDUFA13.

The protein localises to the mitochondrion inner membrane. It carries out the reaction a ubiquinone + NADH + 5 H(+)(in) = a ubiquinol + NAD(+) + 4 H(+)(out). Core subunit of the mitochondrial membrane respiratory chain NADH dehydrogenase (Complex I) which catalyzes electron transfer from NADH through the respiratory chain, using ubiquinone as an electron acceptor. Essential for the catalytic activity and assembly of complex I. This Bos taurus (Bovine) protein is NADH dehydrogenase [ubiquinone] iron-sulfur protein 3, mitochondrial (NDUFS3).